The chain runs to 151 residues: D-aminoacyl-tRNA deacylase (151 aa).

Positions 137–138 (GP) match the Gly-cisPro motif, important for rejection of L-amino acids motif.

Belongs to the DTD family. In terms of assembly, homodimer.

The protein resides in the cytoplasm. The enzyme catalyses glycyl-tRNA(Ala) + H2O = tRNA(Ala) + glycine + H(+). It catalyses the reaction a D-aminoacyl-tRNA + H2O = a tRNA + a D-alpha-amino acid + H(+). Functionally, an aminoacyl-tRNA editing enzyme that deacylates mischarged D-aminoacyl-tRNAs. Also deacylates mischarged glycyl-tRNA(Ala), protecting cells against glycine mischarging by AlaRS. Acts via tRNA-based rather than protein-based catalysis; rejects L-amino acids rather than detecting D-amino acids in the active site. By recycling D-aminoacyl-tRNA to D-amino acids and free tRNA molecules, this enzyme counteracts the toxicity associated with the formation of D-aminoacyl-tRNA entities in vivo and helps enforce protein L-homochirality. The sequence is that of D-aminoacyl-tRNA deacylase from Azoarcus sp. (strain BH72).